The primary structure comprises 151 residues: Transcription antitermination protein NusB (151 aa).

This sequence belongs to the NusB family.

In terms of biological role, involved in transcription antitermination. Required for transcription of ribosomal RNA (rRNA) genes. Binds specifically to the boxA antiterminator sequence of the ribosomal RNA (rrn) operons. The sequence is that of Transcription antitermination protein NusB from Hamiltonella defensa subsp. Acyrthosiphon pisum (strain 5AT).